A 696-amino-acid polypeptide reads, in one-letter code: Elongation factor G (696 aa).

Residues 8 to 282 (DRTRNIGIMA…AVIDYLPSPL (275 aa)) form the tr-type G domain. GTP-binding positions include 17 to 24 (AHIDAGKT), 81 to 85 (DTPGH), and 135 to 138 (NKMD).

The protein belongs to the TRAFAC class translation factor GTPase superfamily. Classic translation factor GTPase family. EF-G/EF-2 subfamily.

Its subcellular location is the cytoplasm. Functionally, catalyzes the GTP-dependent ribosomal translocation step during translation elongation. During this step, the ribosome changes from the pre-translocational (PRE) to the post-translocational (POST) state as the newly formed A-site-bound peptidyl-tRNA and P-site-bound deacylated tRNA move to the P and E sites, respectively. Catalyzes the coordinated movement of the two tRNA molecules, the mRNA and conformational changes in the ribosome. The protein is Elongation factor G of Staphylococcus saprophyticus subsp. saprophyticus (strain ATCC 15305 / DSM 20229 / NCIMB 8711 / NCTC 7292 / S-41).